We begin with the raw amino-acid sequence, 440 residues long: Chromosome partition protein MukF (440 aa).

The segment at 208 to 236 (LSETSGTLRELQDTLEAAGDKLQANLLRI) is leucine-zipper.

This sequence belongs to the MukF family. Interacts, and probably forms a ternary complex, with MukE and MukB via its C-terminal region. The complex formation is stimulated by calcium or magnesium. It is required for an interaction between MukE and MukB.

Its subcellular location is the cytoplasm. The protein localises to the nucleoid. Functionally, involved in chromosome condensation, segregation and cell cycle progression. May participate in facilitating chromosome segregation by condensation DNA from both sides of a centrally located replisome during cell division. Not required for mini-F plasmid partitioning. Probably acts via its interaction with MukB and MukE. Overexpression results in anucleate cells. It has a calcium binding activity. In Edwardsiella ictaluri (strain 93-146), this protein is Chromosome partition protein MukF.